A 774-amino-acid chain; its full sequence is Beta-xylosidase/alpha-L-arabinofuranosidase 1 (774 aa).

Residues alanine 1 to glycine 33 form the signal peptide. 2 N-linked (GlcNAc...) asparagine glycosylation sites follow: asparagine 48 and asparagine 136. Aspartate 303 is an active-site residue. Asparagine 437 and asparagine 530 each carry an N-linked (GlcNAc...) asparagine glycan.

This sequence belongs to the glycoside hydrolase 3 family. In terms of processing, proteolytically cleaved in roots to form a 65 kDa protein.

Its subcellular location is the secreted. It localises to the extracellular space. The protein localises to the extracellular matrix. It carries out the reaction Hydrolysis of (1-&gt;4)-beta-D-xylans, to remove successive D-xylose residues from the non-reducing termini.. The enzyme catalyses Hydrolysis of terminal non-reducing alpha-L-arabinofuranoside residues in alpha-L-arabinosides.. Functionally, a bifunctional beta-xylosidase/alpha-L-arabinosidase, exo-enzyme that acts synergistically with endohydrolases. Releases xylose and arabinose from cell walls. Does not cleave xylan from oat spelts although xylan from oat spelts was degraded to xylose when this enzyme was used in combination with xylanase. Also releases xylose and arabinose from aryl glycosides, xylo-oligosaccharides, arabinan from sugar beet and arabino-oligosaccharides, arabinan from sugar beet and arabinoxylan from wheat. The chain is Beta-xylosidase/alpha-L-arabinofuranosidase 1 from Medicago sativa subsp. varia (Alfalfa).